Reading from the N-terminus, the 155-residue chain is Protein SREK1IP1 (155 aa).

The segment at 13–30 (AGCKKCGYPGHLTFECRN) adopts a CCHC-type zinc-finger fold. The interval 44–155 (VSSTSSEDSD…TPNSSEFSRK (112 aa)) is disordered. Position 52 is a phosphoserine (Ser52). Over residues 66 to 84 (QEKRINEEEEKKKEKSKEK) the composition is skewed to basic and acidic residues. Residues 85 to 94 (IKLKKKRKRS) show a composition bias toward basic residues. Ser96 and Ser97 each carry phosphoserine. Positions 107–142 (QKKQKYQKKEKKKEKKSKSKKGKHHKKEKKKRKKEK) are enriched in basic residues. Position 146 is a phosphothreonine (Thr146). The span at 146–155 (TPNSSEFSRK) shows a compositional bias: polar residues.

As to quaternary structure, interacts with SREK1/SFRS12.

Functionally, possible splicing regulator involved in the control of cellular survival. This chain is Protein SREK1IP1 (SREK1IP1), found in Homo sapiens (Human).